The following is a 340-amino-acid chain: Phenylalanine--tRNA ligase alpha subunit (340 aa).

Glu-258 contacts Mg(2+).

This sequence belongs to the class-II aminoacyl-tRNA synthetase family. Phe-tRNA synthetase alpha subunit type 1 subfamily. In terms of assembly, tetramer of two alpha and two beta subunits. Requires Mg(2+) as cofactor.

The protein localises to the cytoplasm. It catalyses the reaction tRNA(Phe) + L-phenylalanine + ATP = L-phenylalanyl-tRNA(Phe) + AMP + diphosphate + H(+). The sequence is that of Phenylalanine--tRNA ligase alpha subunit from Corynebacterium glutamicum (strain ATCC 13032 / DSM 20300 / JCM 1318 / BCRC 11384 / CCUG 27702 / LMG 3730 / NBRC 12168 / NCIMB 10025 / NRRL B-2784 / 534).